A 310-amino-acid chain; its full sequence is MAAESLRIATRRSQLAMWQAEHIAAELQRLHPGLEVELVPMSTRGDEILDQPLARIGGKGLFMKELEDGMLRGEADLAVHSMKDIPWRLPEGFDLAAVSDRADPRDAFVSNHYSDLDELPHGARVGTASLRRQCQIMDRRPDLQIEVLRGNVQTRLRKLDDGVYDAIILAASGLDRLELTHRIAGRLTPEQSLPAVGQGALGIECREGDERVMKLVEGLNHEATRIRINAERGMNARLEGSCQVPIGGYAELDGDEVHLRGLVGAIDGSEVIRGEIRGPAAEAENLGRQLGDDLLARGADRILKAVAEQQ.

S-(dipyrrolylmethanemethyl)cysteine is present on cysteine 242.

Belongs to the HMBS family. In terms of assembly, monomer. Dipyrromethane serves as cofactor.

It carries out the reaction 4 porphobilinogen + H2O = hydroxymethylbilane + 4 NH4(+). It participates in porphyrin-containing compound metabolism; protoporphyrin-IX biosynthesis; coproporphyrinogen-III from 5-aminolevulinate: step 2/4. In terms of biological role, tetrapolymerization of the monopyrrole PBG into the hydroxymethylbilane pre-uroporphyrinogen in several discrete steps. This chain is Porphobilinogen deaminase, found in Halorhodospira halophila (strain DSM 244 / SL1) (Ectothiorhodospira halophila (strain DSM 244 / SL1)).